The sequence spans 544 residues: Chaperonin GroEL 1 (544 aa).

ATP-binding positions include 30 to 33 (TLGP), Lys51, 87 to 91 (DGTTT), Gly415, and Asp494.

The protein belongs to the chaperonin (HSP60) family. In terms of assembly, forms a cylinder of 14 subunits composed of two heptameric rings stacked back-to-back. Interacts with the co-chaperonin GroES.

The protein localises to the cytoplasm. The enzyme catalyses ATP + H2O + a folded polypeptide = ADP + phosphate + an unfolded polypeptide.. In terms of biological role, together with its co-chaperonin GroES, plays an essential role in assisting protein folding. The GroEL-GroES system forms a nano-cage that allows encapsulation of the non-native substrate proteins and provides a physical environment optimized to promote and accelerate protein folding. The polypeptide is Chaperonin GroEL 1 (Syntrophus aciditrophicus (strain SB)).